The chain runs to 689 residues: MATSQRKILVTSALPYANGPIHLGHMLEYIQTDIWSRYQKLRGHECHYICADDAHGTPIMLKAQQLGIAPEDMIAQVNKEHQQDFADFNVAFDNYHSTHSEENRLMASDIYLKLRDNGYIKSKSISQLFDPEKSMFLPDRFVKGTCPKCKSPDQYGDNCDSCGATYSPTELINPKSAVSGATPVMKDTEHFFFDLPAFEGMLKEWTRSGALQVEMANKLDEWFEQGLQQWDITRDAPYFGFEIPDAPGKYFYVWLDAPIGYMGSFKNLCAKRPELSFDEFWGKDSTAEVYHFIGKDIVYFHSLFWPAMLHGSGYRQPNSVYAHGYVTVNGAKMSKSKGTFIKARTYLDHLDPEYLRYYYAAKLSSRIDDLDLNLEDFAQRVNSDLVGKLVNLASRTAGFITKRFNGKLAKINDTTLTEAFLAKQDVIADFYESREYGKAMREIMALADIANGFVADAAPWQMVKHDDQQEAAHQVCSNALNLFRILVTYLKPVLPRLAQDVEAFFQLPLTWDALSQDLAGHEIAPFKAMMQRVELDKVNAMVADSKDNLQVTADAPKTAAPEKTAEASSVSSEPLVDDPISETINFDDFAKIDLRIARIIKAEHVADADKLLKLQLDIGGETRQVFAGIKSAYSPEDLEGKLTVMVANLAPRKMRFGMSEGMVLAAGPGGSDLWILEPHEGAQPGMRVK.

The 'HIGH' region motif lies at 15–25 (PYANGPIHLGH). Zn(2+) contacts are provided by Cys-146, Cys-149, Cys-159, and Cys-162. Residues 332 to 336 (KMSKS) carry the 'KMSKS' region motif. ATP is bound at residue Lys-335. The tract at residues 554-574 (DAPKTAAPEKTAEASSVSSEP) is disordered. Residues 588–689 (DFAKIDLRIA…EGAQPGMRVK (102 aa)) enclose the tRNA-binding domain.

Belongs to the class-I aminoacyl-tRNA synthetase family. MetG type 1 subfamily. Homodimer. Requires Zn(2+) as cofactor.

It localises to the cytoplasm. It carries out the reaction tRNA(Met) + L-methionine + ATP = L-methionyl-tRNA(Met) + AMP + diphosphate. Functionally, is required not only for elongation of protein synthesis but also for the initiation of all mRNA translation through initiator tRNA(fMet) aminoacylation. This is Methionine--tRNA ligase from Shewanella baltica (strain OS185).